A 367-amino-acid polypeptide reads, in one-letter code: Dual specificity protein phosphatase 1 (367 aa).

The 118-residue stretch at 20 to 137 folds into the Rhodanese domain; it reads RAAQCLLLDC…FSASCPELCS (118 aa). Residues 173 to 314 form the Tyrosine-protein phosphatase domain; the sequence is GPVEILSFLY…LLQFESQVLA (142 aa). The active-site Phosphocysteine intermediate is cysteine 258. Phosphoserine; by MAPK1 and MAPK3 is present on residues serine 359 and serine 364.

It belongs to the protein-tyrosine phosphatase family. Non-receptor class dual specificity subfamily. Phosphorylation at Ser-359 and Ser-364 by MAPK1/ERK2 and MAPK3/ERK1 reduces its rate of degradation. In terms of processing, 'Lys-48'-linked polyubiquitinated by NEURL3, leading to proteasomal degradation. In terms of tissue distribution, brain. High level expression seen in the cingulate gyrus within the retrospinal cortex, ventral and medial divisions of the anterior thalamus and the medial geniculate nucleus. Expressed at moderate levels in the parietal and temporal cortex. Expressed in the cerebellum.

Its subcellular location is the nucleus. The enzyme catalyses O-phospho-L-tyrosyl-[protein] + H2O = L-tyrosyl-[protein] + phosphate. It catalyses the reaction O-phospho-L-seryl-[protein] + H2O = L-seryl-[protein] + phosphate. The catalysed reaction is O-phospho-L-threonyl-[protein] + H2O = L-threonyl-[protein] + phosphate. Functionally, dual specificity phosphatase that dephosphorylates MAP kinase MAPK1/ERK2 on both 'Thr-183' and 'Tyr-185', regulating its activity during the meiotic cell cycle. The chain is Dual specificity protein phosphatase 1 from Rattus norvegicus (Rat).